We begin with the raw amino-acid sequence, 315 residues long: Hydroxysteroid 11-beta-dehydrogenase 1-like protein (315 aa).

An N-terminal signal peptide occupies residues 1–15 (MKVLLLTGLGALFFA). NADP(+)-binding positions include 36–62 (GANA…TAHT), 87–88 (DM), and 114–116 (NHI). Serine 165 serves as a coordination point for substrate. Tyrosine 178 acts as the Proton acceptor in catalysis. NADP(+) is bound by residues 178–182 (YSAAK) and 211–217 (GLRDRAS). Residues 221-286 (AVRSSTSRPR…SKTEKNDGHL (66 aa)) form a disordered region. Positions 277–286 (SKTEKNDGHL) are enriched in basic and acidic residues.

This sequence belongs to the short-chain dehydrogenases/reductases (SDR) family. In terms of tissue distribution, highly expressed in the brain.

Its subcellular location is the secreted. The enzyme catalyses cortisone + NADPH + H(+) = cortisol + NADP(+). Unidirectional NADP(+)-dependent cortisol dehydrogenase (in vitro). The sequence is that of Hydroxysteroid 11-beta-dehydrogenase 1-like protein (HSD11B1L) from Homo sapiens (Human).